The primary structure comprises 344 residues: Sesquiterpene synthase 9 (344 aa).

Positions 88, 224, 228, and 232 each coordinate Mg(2+). The DDXXD motif motif lies at 88-92 (DEYSD). Residues 224 to 232 (NDMLSWNVE) carry the NSE/DTE motif motif. R313 and Y314 together coordinate (2E,6E)-farnesyl diphosphate.

It belongs to the terpene synthase family. Mg(2+) is required as a cofactor.

Its function is as follows. Terpene cyclase that catalyzes the cyclization of farnesyl diphosphate (FPP) to a single major sesquiterpene scaffold whose chemical structure is still unknown. The sequence is that of Sesquiterpene synthase 9 from Postia placenta (strain ATCC 44394 / Madison 698-R) (Brown rot fungus).